The chain runs to 528 residues: Sodium-dependent lysophosphatidylcholine symporter 1 (528 aa).

Residues 1–37 (MAGGGGAERVRVGAAAAGLLPPSCRQPRRRESRERLS) are Cytoplasmic-facing. The chain crosses the membrane as a helical span at residues 38–66 (VCSKLCYAVGGAPYQTTGCALGFFLQIYL). The Extracellular segment spans residues 67-73 (LDVAQLD). The helical transmembrane segment at 74-99 (PFYASIILFVGRAWDAITDPMVGFFI) threads the bilayer. The Cytoplasmic segment spans residues 100–109 (SKTPWTRFGR). Residues 110–129 (LMPWIIFSTPFAVISYFLIW) traverse the membrane as a helical segment. Residues 130–138 (FVPDISTGQ) lie on the Extracellular side of the membrane. The chain crosses the membrane as a helical span at residues 139–161 (VMWYLIFYCIFQTLVTCFHVPYS). The Cytoplasmic portion of the chain corresponds to 162 to 176 (ALTMFISREQSERDS). Residues 177 to 199 (ATAYRMTVEVLGTVLGTAIQGQI) form a helical membrane-spanning segment. The Extracellular portion of the chain corresponds to 200-241 (VGKAVTPCIENPPFLSETNFSVAIRNVNMTHYTGSLADTRNA). A disulfide bridge connects residues Cys-207 and Cys-460. Asn-218 and Asn-227 each carry an N-linked (GlcNAc...) asparagine glycan. Residues 242-263 (YMVAAGVIGGLYILCAVILSVG) form a helical membrane-spanning segment. Residues 264–295 (VREKRESSELQSDEPVSFFRGLKLVMNHGAYI) are Cytoplasmic-facing. A helical transmembrane segment spans residues 296-319 (KLITGFLFTSLAFMLLEGNFALFC). Topologically, residues 320-328 (TYTLGFRNE) are extracellular. A helical membrane pass occupies residues 329 to 351 (FQNILLAIMLSATLTIPFWQWFL). The Cytoplasmic segment spans residues 352 to 355 (TRFG). The chain crosses the membrane as a helical span at residues 356 to 376 (KKTAVYVGISSAVPFLITVVV). At 377–381 (LDSNL) the chain is on the extracellular side. The chain crosses the membrane as a helical span at residues 382 to 404 (VVTYIVAVAAGISVAAAFLLPWS). The Cytoplasmic segment spans residues 405-427 (MLPDVIDDFKLQHPESRGHEAIF). The chain crosses the membrane as a helical span at residues 428–450 (FSFYVFFTKFTSGVSLGISTLSL). Topologically, residues 451–467 (DFAGYQTRGCSQPSEVN) are extracellular. Residues 468 to 490 (ITLKLLVSAVPVGLILLGLLLFK) traverse the membrane as a helical segment. Over 491–528 (LYPIDEEKRRENKKALQDLREESNSSSESDSTELANIV) the chain is Cytoplasmic. Basic and acidic residues predominate over residues 503 to 513 (KKALQDLREES). Residues 503-528 (KKALQDLREESNSSSESDSTELANIV) are disordered. The segment covering 514–528 (NSSSESDSTELANIV) has biased composition (low complexity).

It belongs to the major facilitator superfamily.

It localises to the cell membrane. The protein localises to the endoplasmic reticulum membrane. It carries out the reaction a 1-acyl-sn-glycero-3-phosphocholine(in) + Na(+)(in) = a 1-acyl-sn-glycero-3-phosphocholine(out) + Na(+)(out). The catalysed reaction is 1-(4Z,7Z,10Z,13Z,16Z,19Z-docosahexaenoyl)-sn-glycero-3-phosphocholine(in) + Na(+)(in) = 1-(4Z,7Z,10Z,13Z,16Z,19Z-docosahexaenoyl)-sn-glycero-3-phosphocholine(out) + Na(+)(out). It catalyses the reaction 1-(9Z-octadecenoyl)-sn-glycero-3-phosphocholine(in) + Na(+)(in) = 1-(9Z-octadecenoyl)-sn-glycero-3-phosphocholine(out) + Na(+)(out). The enzyme catalyses 1-hexadecanoyl-sn-glycero-3-phosphocholine(in) + Na(+)(in) = 1-hexadecanoyl-sn-glycero-3-phosphocholine(out) + Na(+)(out). It carries out the reaction a 1-acyl-sn-glycero-3-phosphoethanolamine(in) + Na(+)(in) = a 1-acyl-sn-glycero-3-phosphoethanolamine(out) + Na(+)(out). In terms of biological role, sodium-dependent lysophosphatidylcholine (LPC) symporter, which plays an essential role for blood-brain barrier formation and function. Specifically expressed in endothelium of the blood-brain barrier of micro-vessels and transports LPC into the brain. Transport of LPC is essential because it constitutes the major mechanism by which docosahexaenoic acid (DHA), an omega-3 fatty acid that is essential for normal brain growth and cognitive function, enters the brain. Transports LPC carrying long-chain fatty acids such LPC oleate and LPC palmitate with a minimum acyl chain length of 14 carbons. Does not transport docosahexaenoic acid in unesterified fatty acid. This chain is Sodium-dependent lysophosphatidylcholine symporter 1, found in Gallus gallus (Chicken).